The sequence spans 367 residues: MNIKSLLLGSAAALVAASGAQAADAIVAPEPEAVEYVRVCDAYGAGYFYIPGTETCLRVHGYVRYDVKGGDDVYTGSDRKGWDKGARFALMFNTNSETELGTLGTYTQLRFNYTSNNSRHDGQYGDFSDDRDVADGGVSTGTDLQFAYITLGGFKVGIDESEFHTFTGYLGDVINDDVVAAGSYRTGKIAYTFTGGNGFSAVIALEQGGEDVDNDYTIDGYMPHVVGGLKYAGGWGSIAGAVAYDPVIEEWATKVRGDVNITDRFSVWLQGAYSSAATPNQNYGQWGGDWAVWGGAKFIATEKATFNLQAAHDDWGKTAVTANVAYQLVPGFTITPEVSYTKFGGEWKDTVAEDNAWGGIVRFQRSF.

The signal sequence occupies residues 1–22 (MNIKSLLLGSAAALVAASGAQA).

Belongs to the alphaproteobacteria porin family. As to quaternary structure, monomer.

The protein resides in the cell outer membrane. In terms of biological role, forms passive diffusion pores that allow small molecular weight hydrophilic materials across the outer membrane. The protein is Porin Omp2a (omp2a) of Brucella canis (strain ATCC 23365 / NCTC 10854 / RM-666).